A 566-amino-acid polypeptide reads, in one-letter code: Proline--tRNA ligase (566 aa).

It belongs to the class-II aminoacyl-tRNA synthetase family. ProS type 1 subfamily. As to quaternary structure, homodimer.

It localises to the cytoplasm. It catalyses the reaction tRNA(Pro) + L-proline + ATP = L-prolyl-tRNA(Pro) + AMP + diphosphate. Its function is as follows. Catalyzes the attachment of proline to tRNA(Pro) in a two-step reaction: proline is first activated by ATP to form Pro-AMP and then transferred to the acceptor end of tRNA(Pro). As ProRS can inadvertently accommodate and process non-cognate amino acids such as alanine and cysteine, to avoid such errors it has two additional distinct editing activities against alanine. One activity is designated as 'pretransfer' editing and involves the tRNA(Pro)-independent hydrolysis of activated Ala-AMP. The other activity is designated 'posttransfer' editing and involves deacylation of mischarged Ala-tRNA(Pro). The misacylated Cys-tRNA(Pro) is not edited by ProRS. The sequence is that of Proline--tRNA ligase from Staphylococcus saprophyticus subsp. saprophyticus (strain ATCC 15305 / DSM 20229 / NCIMB 8711 / NCTC 7292 / S-41).